A 383-amino-acid polypeptide reads, in one-letter code: D-alanine--D-alanine ligase (383 aa).

The ATP-grasp domain maps to 164-373 (KLAFQAAGLE…YSALIDELIT (210 aa)). 196–251 (VAELGFPVFVKPARAGSSFGITRVDEPSQLDAAIATAREHDLKLVVEAGIDGREIE) serves as a coordination point for ATP. Mg(2+) is bound by residues Asp-327, Glu-340, and Asn-342.

Belongs to the D-alanine--D-alanine ligase family. It depends on Mg(2+) as a cofactor. Mn(2+) serves as cofactor.

The protein resides in the cytoplasm. The enzyme catalyses 2 D-alanine + ATP = D-alanyl-D-alanine + ADP + phosphate + H(+). It functions in the pathway cell wall biogenesis; peptidoglycan biosynthesis. Functionally, cell wall formation. The protein is D-alanine--D-alanine ligase of Kocuria rhizophila (strain ATCC 9341 / DSM 348 / NBRC 103217 / DC2201).